The primary structure comprises 338 residues: Fructose-1,6-bisphosphatase class 1 (338 aa).

The Mg(2+) site is built by Glu91, Asp113, Leu115, and Asp116. Substrate contacts are provided by residues 116 to 119, Asn208, and Lys274; that span reads DGSS. A Mg(2+)-binding site is contributed by Glu280.

The protein belongs to the FBPase class 1 family. As to quaternary structure, homotetramer. Mg(2+) serves as cofactor.

Its subcellular location is the cytoplasm. The enzyme catalyses beta-D-fructose 1,6-bisphosphate + H2O = beta-D-fructose 6-phosphate + phosphate. It participates in carbohydrate biosynthesis; gluconeogenesis. The protein is Fructose-1,6-bisphosphatase class 1 of Ralstonia nicotianae (strain ATCC BAA-1114 / GMI1000) (Ralstonia solanacearum).